A 1026-amino-acid chain; its full sequence is Beta-galactosidase (1026 aa).

Substrate contacts are provided by asparagine 104 and aspartate 203. Aspartate 203 is a Na(+) binding site. Mg(2+) contacts are provided by glutamate 418, histidine 420, and glutamate 463. Residues glutamate 463 and 539 to 542 (EYAH) each bind substrate. Residue glutamate 463 is the Proton donor of the active site. The active-site Nucleophile is the glutamate 539. A Mg(2+)-binding site is contributed by asparagine 599. Residues phenylalanine 603 and asparagine 606 each contribute to the Na(+) site. Substrate-binding residues include asparagine 606 and tryptophan 1002.

It belongs to the glycosyl hydrolase 2 family. In terms of assembly, homotetramer. It depends on Mg(2+) as a cofactor. The cofactor is Na(+).

The catalysed reaction is Hydrolysis of terminal non-reducing beta-D-galactose residues in beta-D-galactosides.. This is Beta-galactosidase from Erwinia tasmaniensis (strain DSM 17950 / CFBP 7177 / CIP 109463 / NCPPB 4357 / Et1/99).